We begin with the raw amino-acid sequence, 239 residues long: Tetrahydromethanopterin S-methyltransferase subunit A (239 aa).

Topologically, residues 1–215 (MANKKSPAAT…EAAMIAKFNS (215 aa)) are cytoplasmic. Residue H85 coordinates 5-hydroxybenzimidazolylcob(I)amide. The chain crosses the membrane as a helical span at residues 216-238 (GYYNGKIQGIAIGLFLSILVFSL). Residue L239 is a topological domain, extracellular.

Belongs to the MtrA family. The complex is composed of 8 subunits; MtrA, MtrB, MtrC, MtrD, MtrE, MtrF, MtrG and MtrH. Requires 5-hydroxybenzimidazolylcob(I)amide as cofactor.

It is found in the cell membrane. The catalysed reaction is 5-methyl-5,6,7,8-tetrahydromethanopterin + coenzyme M + 2 Na(+)(in) = 5,6,7,8-tetrahydromethanopterin + methyl-coenzyme M + 2 Na(+)(out). The protein operates within one-carbon metabolism; methanogenesis from CO(2); methyl-coenzyme M from 5,10-methylene-5,6,7,8-tetrahydromethanopterin: step 2/2. In terms of biological role, part of a complex that catalyzes the formation of methyl-coenzyme M and tetrahydromethanopterin from coenzyme M and methyl-tetrahydromethanopterin. This is an energy-conserving, sodium-ion translocating step. This Methanococcus maripaludis (strain C7 / ATCC BAA-1331) protein is Tetrahydromethanopterin S-methyltransferase subunit A.